The primary structure comprises 217 residues: Ubiquitin-conjugating enzyme E2 1 (217 aa).

The region spanning 4 to 151 (NRSRRIAKEL…AREWTSSYAA (148 aa)) is the UBC core domain. Residue Cys-89 is the Glycyl thioester intermediate of the active site.

This sequence belongs to the ubiquitin-conjugating enzyme family.

It localises to the cytoplasm. Its subcellular location is the nucleus. The enzyme catalyses S-ubiquitinyl-[E1 ubiquitin-activating enzyme]-L-cysteine + [E2 ubiquitin-conjugating enzyme]-L-cysteine = [E1 ubiquitin-activating enzyme]-L-cysteine + S-ubiquitinyl-[E2 ubiquitin-conjugating enzyme]-L-cysteine.. It functions in the pathway protein modification; protein ubiquitination. Its function is as follows. Catalyzes the covalent attachment of ubiquitin to other proteins. Functions in degradation of misfolded or regulated proteins localized in the endoplasmic reticulum (ER) lumen or membrane via the ubiquitin-proteasome system. Cognate E2 conjugating enzyme for the HRD1 ubiquitin ligase complex, which is part of the ERAD-L and ERAD-M pathways responsible for the rapid degradation of soluble lumenal and membrane proteins with misfolded lumenal domains (ERAD-L), or ER-membrane proteins with misfolded transmembrane domains (ERAD-M). The polypeptide is Ubiquitin-conjugating enzyme E2 1 (ubc1) (Schizosaccharomyces pombe (strain 972 / ATCC 24843) (Fission yeast)).